The following is an 81-amino-acid chain: Acyl carrier protein (81 aa).

A Carrier domain is found at 3–78 (QEIFEKVKSI…AAVDYIEKEQ (76 aa)). Ser-38 is modified (O-(pantetheine 4'-phosphoryl)serine).

The protein belongs to the acyl carrier protein (ACP) family. 4'-phosphopantetheine is transferred from CoA to a specific serine of apo-ACP by AcpS. This modification is essential for activity because fatty acids are bound in thioester linkage to the sulfhydryl of the prosthetic group.

Its subcellular location is the cytoplasm. The protein operates within lipid metabolism; fatty acid biosynthesis. Its function is as follows. Carrier of the growing fatty acid chain in fatty acid biosynthesis. In Crocosphaera subtropica (strain ATCC 51142 / BH68) (Cyanothece sp. (strain ATCC 51142)), this protein is Acyl carrier protein.